The following is a 1484-amino-acid chain: MIERGKFRSLTLVNWNGFFARTFDLDALVTTLSGGNGAGKSTTMAAFITALIPDLTLLHFRNTTEAGATSGSRDKGLHGKLRAGVCYSALEVVNSRHQRVLVGVRLQQIAGRDRKVDIKPFMIQGLPVKVTPTEILTMTMGDRQARVLPLQELKERVEAIEGVLFKQFNSITDYHSLMFDLGVVPRRLRSSADRSKYYRLIEASLYGGISSAITRSLRDYLLPENSGVRKAFQDMEAALRENRLTLEAIRVTQSDRDLFKHLISEATAYVAADYMRHANERRLHLDDALTLRRDVFGSRKQLASEQYRHVDMARELAEISGGESDLETDYQAASDHLNLVQTAMRQQEKIGRYQEDLEELAFRLEEQNEVVAQSAEQQQENEARLEAAELEVDELKSQLADYQQALDVQQTRAIQFQQALQALDRARELCSLPAMTWEDAAPTLAIYKEREQEATERLLGFEQKLNIAEAASSRFEQAYGLVVKIAGQVSRSDAWQTARELIRDAASQRHQAERLQALRSQLNELEQRLREQQDAERLLQEFCQRMGQDYPPEELDVVQQELEARVETLSATVSEAGERRLALRQTLEQVTARIEQLTARALAWLAAQDALTALSEQSGEALTSSRQVTDTMQLLLERERETTVERDEVAGRKRCIEAQIERLSQPGGTDDARLTTLAERFGGVLLSEIYDDVTLDNAPYFSALYGPSHHAIVVPDLSRVREQLDGLEDCPDDLYLIEGDPQSFDDNVFGVEELEGAVLVKVADRQWRYSRFPAVPLFGRAARESRLENLSAERDVLAERYATLSFDVQKIQRQHQAFSRFIGAHLAVAFEPDPEAEMRTLNGRRGELERELSDHHGQNQQSRQHYDQAREGLQLLNRLIPRLGVLLDDTLQDRLETVQADWHDAQEAARYLSQHQKALDQLEPLVAVLQSDPEQHEQLRADYEQAQQTQRQVRQQAFALTEVVQRRTHFSYSDSAGMLSENTDLNDKLRQRLERAEAERSQARDALHAHQAQLTQFSQVQASLKSSYDAKQDMLKELMQELHDIGVQVDANAEARARERRDQLHMALSQNRGRRNQLEKQLTFCEAEMDALQKKLRKLERDYYQTREQVVSAKAGWCSVLRLVKENGVERRLHRRELAYMEAEDLRSMSDKALGALRLAVADNEHLRDVLRLSEDLKRPERKIQFFIAVYQHLRERIRQDIIRTDDPVEAIEQMEIELNRLTEELTAREQKLAISSKSVANIIRKTIQREQNRIRMLNQGLQAVSFGQVKSVRLNVSVREAHATLLDVLSEQQEQHQDLFSSQRLTFSEALAKLYQRLNPQIDLRQRTPQTVGEELLDYRNYLEIEVEVNRGADGWLRAESGALSTGEAIGTGMSILVIVVQSWEEESSRLRGKDISPCRLLFLDEAARLDAKSIATLFELCDRLQMQLIIAAPENISPEKGTTYKLVRKVFNNQEHVHVVGLLGFGTEQAAPPSTALTETDS.

Residue 34 to 41 (GGNGAGKS) coordinates ATP. 6 coiled-coil regions span residues 338-415 (NLVQ…RAIQ), 496-604 (QTAR…ALAW), 781-805 (AARE…ATLS), 835-868 (EAEM…HYDQ), 903-1115 (HDAQ…SAKA), and 1206-1265 (DDPV…LQAV). Residues 666-783 (PGGTDDARLT…AVPLFGRAAR (118 aa)) are flexible hinge.

It belongs to the SMC family. MukB subfamily. Homodimerization via its hinge domain. Binds to DNA via its C-terminal region. Interacts, and probably forms a ternary complex, with MukE and MukF via its C-terminal region. The complex formation is stimulated by calcium or magnesium. Interacts with tubulin-related protein FtsZ.

The protein resides in the cytoplasm. Its subcellular location is the nucleoid. Its function is as follows. Plays a central role in chromosome condensation, segregation and cell cycle progression. Functions as a homodimer, which is essential for chromosome partition. Involved in negative DNA supercoiling in vivo, and by this means organize and compact chromosomes. May achieve or facilitate chromosome segregation by condensation DNA from both sides of a centrally located replisome during cell division. The protein is Chromosome partition protein MukB of Sodalis glossinidius (strain morsitans).